The sequence spans 90 residues: Putative septation protein SpoVG (90 aa).

It belongs to the SpoVG family.

Functionally, could be involved in septation. In Clostridium perfringens (strain ATCC 13124 / DSM 756 / JCM 1290 / NCIMB 6125 / NCTC 8237 / Type A), this protein is Putative septation protein SpoVG.